Consider the following 194-residue polypeptide: Alkyl hydroperoxide reductase AhpD (194 aa).

Residue Cys132 is the Proton donor of the active site. An intrachain disulfide couples Cys132 to Cys135. Residue Cys135 is the Cysteine sulfenic acid (-SOH) intermediate of the active site.

Belongs to the AhpD family.

It catalyses the reaction N(6)-[(R)-dihydrolipoyl]-L-lysyl-[lipoyl-carrier protein] + a hydroperoxide = N(6)-[(R)-lipoyl]-L-lysyl-[lipoyl-carrier protein] + an alcohol + H2O. Its function is as follows. Antioxidant protein with alkyl hydroperoxidase activity. Required for the reduction of the AhpC active site cysteine residues and for the regeneration of the AhpC enzyme activity. The protein is Alkyl hydroperoxide reductase AhpD of Koribacter versatilis (strain Ellin345).